Reading from the N-terminus, the 128-residue chain is NADH-ubiquinone oxidoreductase chain 3 (128 aa).

3 helical membrane passes run 4–24 (FIIF…VNIL), 50–70 (LAFN…DLEI), and 86–106 (YGFT…VYEI).

Belongs to the complex I subunit 3 family. Complex I is composed of 37 different subunits.

The protein localises to the mitochondrion membrane. It carries out the reaction a ubiquinone + NADH + 5 H(+)(in) = a ubiquinol + NAD(+) + 4 H(+)(out). Its function is as follows. Core subunit of the mitochondrial membrane respiratory chain NADH dehydrogenase (Complex I) that is believed to belong to the minimal assembly required for catalysis. Complex I functions in the transfer of electrons from NADH to the respiratory chain. The immediate electron acceptor for the enzyme is believed to be ubiquinone. The chain is NADH-ubiquinone oxidoreductase chain 3 (ND3) from Yarrowia lipolytica (strain CLIB 122 / E 150) (Yeast).